A 711-amino-acid polypeptide reads, in one-letter code: Polyribonucleotide nucleotidyltransferase (711 aa).

Positions 486 and 492 each coordinate Mg(2+). The KH domain maps to 553–612 (PRIHTIKISTDKIKDVIGKGGSVIRALTEETGTTIEIEDDGTVKIAATDGEKAKYAIRRI). Residues 622–690 (GRIYNGKVTR…RQGRVRLSIK (69 aa)) enclose the S1 motif domain. Residues 690–711 (KEATEQSQPAAAPEAPASEQAE) form a disordered region. The span at 694–711 (EQSQPAAAPEAPASEQAE) shows a compositional bias: low complexity.

This sequence belongs to the polyribonucleotide nucleotidyltransferase family. Component of the RNA degradosome, which is a multiprotein complex involved in RNA processing and mRNA degradation. The cofactor is Mg(2+).

The protein localises to the cytoplasm. It carries out the reaction RNA(n+1) + phosphate = RNA(n) + a ribonucleoside 5'-diphosphate. Its function is as follows. Involved in mRNA degradation. Catalyzes the phosphorolysis of single-stranded polyribonucleotides processively in the 3'- to 5'-direction. In Salmonella choleraesuis (strain SC-B67), this protein is Polyribonucleotide nucleotidyltransferase.